We begin with the raw amino-acid sequence, 911 residues long: Alpha-actinin-4 (911 aa).

The segment at 1 to 30 (MVDYHAASQSYQYGPSSAGNGAGGGGSMGD) is disordered. Residues 1 to 269 (MVDYHAASQS…YVSSFYHAFS (269 aa)) form an actin-binding region. The interval 12–26 (QYGPSSAGNGAGGGG) is interaction with VCL. Tyr-31 is modified (phosphotyrosine). The interaction with VCL stretch occupies residues 40 to 61 (RDLLLDPAWEKQQRKTFTAWCN). Calponin-homology (CH) domains follow at residues 50–154 (KQQR…LRFA) and 163–269 (TSAK…HAFS). Positions 84 to 88 (LMLLL) match the LXXLL motif motif. The interaction with VCL stretch occupies residues 108–126 (KINNVNKALDFIASKGVKL). Position 114 is an N6-acetyllysine (Lys-114). The interval 177 to 192 (TAPYKNVNVQNFHISW) is polyphosphoinositide (PIP2)-binding. At Lys-214 the chain carries N6-acetyllysine. Thr-249 carries the phosphothreonine modification. Spectrin repeat units lie at residues 293 to 403 (HLME…WLLN), 413 to 518 (HLAE…ALEK), 528 to 639 (QLHL…ALLE), and 649 to 752 (HLRR…EVEN). An N6-acetyllysine mark is found at Lys-592 and Lys-625. Phosphoserine is present on Ser-696. Residues 736-911 (WEQLLTTIAR…STALYGESDL (176 aa)) are mediates interaction with MICALL2. 2 consecutive EF-hand domains span residues 765 to 800 (EQMQ…LGYD) and 806 to 841 (QGEA…ETTD). Position 778 (Asp-778) interacts with Ca(2+). At Lys-779 the chain carries N6-acetyllysine. Ca(2+) is bound by residues Asp-780 and Glu-789. Lys-859 bears the N6-acetyllysine mark. Residue Ser-909 is modified to Phosphoserine.

It belongs to the alpha-actinin family. Homodimer; antiparallel. Identified in a IGF2BP1-dependent mRNP granule complex containing untranslated mRNAs. Component of the CART complex, at least composed of ACTN4, HGS/HRS, MYO5B and TRIM3. Binds TRIM3 at the N-terminus. Interacts with MAGI1. Interacts with PDLIM2. Identified in a complex with CASK, IQGAP1, MAGI2, NPHS1, SPTAN1 and SPTBN1. Interacts with MICALL2 (preferentially in opened conformation); stimulated by RAB13 activation. Interacts with PPARG and RARA. Binds to VCL; this interaction triggers VCL conformational changes. Interacts with SEPTIN14. Interacts with IGSF8.

It is found in the nucleus. It localises to the cytoplasm. Its subcellular location is the cell junction. The protein resides in the cytoskeleton. The protein localises to the stress fiber. It is found in the perinuclear region. Functionally, F-actin cross-linking protein which is thought to anchor actin to a variety of intracellular structures. This is a bundling protein. Probably involved in vesicular trafficking via its association with the CART complex. The CART complex is necessary for efficient transferrin receptor recycling but not for EGFR degradation. Involved in tight junction assembly in epithelial cells probably through interaction with MICALL2. Links MICALL2 to the actin cytoskeleton and recruits it to the tight junctions. May also function as a transcriptional coactivator, stimulating transcription mediated by the nuclear hormone receptors PPARG and RARA. Association with IGSF8 regulates the immune synapse formation and is required for efficient T-cell activation. This is Alpha-actinin-4 from Pongo abelii (Sumatran orangutan).